An 813-amino-acid polypeptide reads, in one-letter code: Fibroblast growth factor receptor 2 (813 aa).

Positions 1-14 (MLLLALLAFLLVSR) are cleaved as a signal peptide. The Extracellular portion of the chain corresponds to 18-367 (RPSYSMVDDT…EDNPVPYYME (350 aa)). An Ig-like C2-type 1 domain is found at 21-117 (YSMVDDTTPE…NSHFFHVNVT (97 aa)). The cysteines at positions 58 and 103 are disulfide-linked. N-linked (GlcNAc...) asparagine glycosylation is found at N79 and N115. The segment at 119-143 (ASSSGDDEDDNDGSEDFTNDNNNIR) is disordered. The segment covering 123–136 (GDDEDDNDGSEDFT) has biased composition (acidic residues). Ig-like C2-type domains are found at residues 145–237 (PYWT…YHLD) and 246–348 (PILQ…AWLT). Residues 152-169 (KMEKKLHAVSAANTVKLR) form a heparin-binding region. A disulfide bridge connects residues C170 and C221. N-linked (GlcNAc...) asparagine glycans are attached at residues N231, N255, N287, N308, and N321. The cysteines at positions 268 and 332 are disulfide-linked. Residues 368 to 388 (IGIYSTGIFIIFCMVVVCVVC) form a helical membrane-spanning segment. The Cytoplasmic segment spans residues 389–813 (RMRQGAKKKK…FQHVNGVVKT (425 aa)). Position 456 is a phosphotyrosine; by autocatalysis (Y456). Residues 471 to 760 (LTLGKPLGEG…LTLTTNEEYL (290 aa)) form the Protein kinase domain. Residues 477–485 (LGEGCFGQV), K507, 555–557 (EYA), and N561 contribute to the ATP site. Y576 carries the post-translational modification Phosphotyrosine; by autocatalysis. The active-site Proton acceptor is D616. Y646, Y647, and Y759 each carry phosphotyrosine; by autocatalysis. The span at 771-792 (PSFPDSSCSASSSSGDDSVFSP) shows a compositional bias: low complexity. Positions 771–801 (PSFPDSSCSASSSSGDDSVFSPDPMPHDPCL) are disordered.

It belongs to the protein kinase superfamily. Tyr protein kinase family. Fibroblast growth factor receptor subfamily. In terms of assembly, monomer. Homodimer after ligand binding. Post-translationally, autophosphorylated. Binding of FGF family members together with heparan sulfate proteoglycan or heparin promotes receptor dimerization and autophosphorylation on tyrosine residues. Autophosphorylation occurs in trans between the two FGFR molecules present in the dimer. In terms of processing, N-glycosylated in the endoplasmic reticulum. The N-glycan chains undergo further maturation to an Endo H-resistant form in the Golgi apparatus. Ubiquitinated. FGFR2 is rapidly ubiquitinated after autophosphorylation, leading to internalization and degradation. Subject to degradation both in lysosomes and by the proteasome. As to expression, expressed in the anterior neural plate in early neurula stage embryos. Later in development, the protein is also expressed in the eye anlagen, midbrain-hindbrain boundary and otic vesicle.

It localises to the cell membrane. It is found in the golgi apparatus. Its subcellular location is the cytoplasmic vesicle. The enzyme catalyses L-tyrosyl-[protein] + ATP = O-phospho-L-tyrosyl-[protein] + ADP + H(+). Its activity is regulated as follows. Present in an inactive conformation in the absence of bound ligand. Ligand binding leads to dimerization and activation by autophosphorylation on tyrosine residues. Functionally, tyrosine-protein kinase that acts as a cell-surface receptor for fibroblast growth factors and plays an essential role in the regulation of cell proliferation, differentiation, migration and apoptosis, and in the regulation of embryonic development. Required for normal embryonic patterning, limb bud development, lung morphogenesis, osteogenesis and skin development. Plays an essential role in the regulation of osteoblast differentiation, proliferation and apoptosis, and is required for normal skeleton development. Promotes cell proliferation in keratinocytes and immature osteoblasts, but promotes apoptosis in differentiated osteoblasts. Phosphorylates PLCG1, FRS2 and PAK4. Ligand binding leads to the activation of several signaling cascades. Activation of PLCG1 leads to the production of the cellular signaling molecules diacylglycerol and inositol 1,4,5-trisphosphate. Phosphorylation of FRS2 triggers recruitment of GRB2, GAB1, PIK3R1 and SOS1, and mediates activation of RAS, MAPK1/ERK2, MAPK3/ERK1 and the MAP kinase signaling pathway, as well as of the AKT1 signaling pathway. FGFR2 signaling is down-regulated by ubiquitination, internalization and degradation. Mutations that lead to constitutive kinase activation or impair normal FGFR2 maturation, internalization and degradation lead to aberrant signaling. Over-expressed FGFR2 promotes activation of STAT1. This Xenopus laevis (African clawed frog) protein is Fibroblast growth factor receptor 2 (fgfr2).